The following is a 281-amino-acid chain: Bis(5'-nucleosyl)-tetraphosphatase, symmetrical (281 aa).

This sequence belongs to the Ap4A hydrolase family.

It carries out the reaction P(1),P(4)-bis(5'-adenosyl) tetraphosphate + H2O = 2 ADP + 2 H(+). In terms of biological role, hydrolyzes diadenosine 5',5'''-P1,P4-tetraphosphate to yield ADP. This chain is Bis(5'-nucleosyl)-tetraphosphatase, symmetrical, found in Acidovorax sp. (strain JS42).